We begin with the raw amino-acid sequence, 273 residues long: Putative phosphoenolpyruvate synthase regulatory protein (273 aa).

ADP is bound at residue 154–161 (GVSRSGKT).

This sequence belongs to the pyruvate, phosphate/water dikinase regulatory protein family. PSRP subfamily.

The catalysed reaction is [pyruvate, water dikinase] + ADP = [pyruvate, water dikinase]-phosphate + AMP + H(+). It carries out the reaction [pyruvate, water dikinase]-phosphate + phosphate + H(+) = [pyruvate, water dikinase] + diphosphate. Its function is as follows. Bifunctional serine/threonine kinase and phosphorylase involved in the regulation of the phosphoenolpyruvate synthase (PEPS) by catalyzing its phosphorylation/dephosphorylation. This is Putative phosphoenolpyruvate synthase regulatory protein from Neisseria meningitidis serogroup B (strain ATCC BAA-335 / MC58).